Reading from the N-terminus, the 96-residue chain is Small ribosomal subunit protein uS19 (96 aa).

Belongs to the universal ribosomal protein uS19 family.

Its function is as follows. Protein S19 forms a complex with S13 that binds strongly to the 16S ribosomal RNA. The polypeptide is Small ribosomal subunit protein uS19 (Gemmatimonas aurantiaca (strain DSM 14586 / JCM 11422 / NBRC 100505 / T-27)).